The following is a 126-amino-acid chain: SPbeta prophage-derived uncharacterized protein YorC (126 aa).

The chain is SPbeta prophage-derived uncharacterized protein YorC (yorC) from Bacillus subtilis (strain 168).